Reading from the N-terminus, the 189-residue chain is Haloacid dehalogenase-like hydrolase domain-containing protein 3 (189 aa).

Belongs to the HAD-like hydrolase superfamily.

The sequence is that of Haloacid dehalogenase-like hydrolase domain-containing protein 3 (hdhd3) from Xenopus tropicalis (Western clawed frog).